Here is a 1682-residue protein sequence, read N- to C-terminus: Merozoite surface protein 1 (1682 aa).

The signal sequence occupies residues 1–19; that stretch reads MKIIFFLCSFLFFIINTQC. The disordered stretch occupies residues 68–110; that stretch reads AVSTQSAKNPPGATVPSGTASTKGAIRSPGAANPSDDSSDSDA. N-linked (GlcNAc...) asparagine glycosylation is found at Asn-233, Asn-462, Asn-528, and Asn-599. The segment at 696 to 729 is disordered; it reads SETTEDGGHSTHTLSQSGETEVTEETEETVGHTT. Asn-785, Asn-881, Asn-901, Asn-947, Asn-1071, and Asn-1178 each carry an N-linked (GlcNAc...) asparagine glycan. The disordered stretch occupies residues 870–918; that stretch reads ITGTSSTSSPGNTTVNTAQSATHSNSQNQQSNASSTNTQNGVAVSSGPA. Residues 871–909 show a composition bias toward low complexity; sequence TGTSSTSSPGNTTVNTAQSATHSNSQNQQSNASSTNTQN. Disordered regions lie at residues 1212–1241 and 1433–1453; these read TPPQPDVTPSPLSVRVSGSSGSTKEETQIP and KEFPSSPPTTPPSPAKTDEQK. Residues 1227-1241 show a composition bias toward polar residues; that stretch reads VSGSSGSTKEETQIP. The span at 1437 to 1446 shows a compositional bias: pro residues; that stretch reads SSPPTTPPSP. N-linked (GlcNAc...) asparagine glycosylation is present at Asn-1569. EGF-like domains lie at 1573-1613 and 1614-1661; these read HQCV…VENP and NPTC…IFCS. 6 disulfide bridges follow: Cys-1575–Cys-1586, Cys-1580–Cys-1596, Cys-1598–Cys-1609, Cys-1617–Cys-1630, Cys-1624–Cys-1644, and Cys-1646–Cys-1660. The GPI-anchor amidated serine moiety is linked to residue Ser-1661. Residues 1662–1682 constitute a propeptide, removed in mature form; that stretch reads SSNFLGISFLLILMLILYSFI.

Forms a complex composed of subunits p83, p30, p38, and p42 which remain non-covalently associated; the complex is formed at the merozoite surface prior to egress from host erythrocytes. Forms a complex composed of processed MSP1 subunits, MSP6 subunit p36 and MSP7; the complex is formed at the merozoite surface prior to egress from host erythrocytes. Within the complex, interacts (via subunit p38) with MSP6 subunit p36 and (via subunits p83, p30 and p38) with MSP7 (via subunit p22). Forms a complex composed of MSP1, MSP6, DBLMSP1 and DBLMSP2. Within the complex, interacts (via subunit p38) with DBLMSP1 and DBLMSP2. Forms a complex composed of MSP1, and rhoptry proteins RhopH3, RAP1 and CLAG9/RhopH3. Within the complex, interacts (via subunits p42 and p19) with RhopH3 (via C-terminus). Forms a complex composed of MSP1, MSP6, MSP7, MSP9 and MSP3; within the complex, MSP6 and MSP9 mediate the binding to the host erythrocyte. Interacts (via subunits p19 and p42) with MSP9; the interaction is direct; MSP1 subunits p19 or p42, and MSP9 form a co-ligand complex that interacts with host SLC4A1/Band 3 protein. May interact with PFD6. Interacts with host spectrin. In terms of assembly, interacts with host glycophorin GYPA in a sialic acid-independent manner. As to quaternary structure, interacts with host proinflammatory cytokine S100P; the interaction blocks S100P inflammatory and chemotactic activities. Interacts with host SLC4A1/Band 3 (via 5ABC region) on the host erythrocyte surface in a sialic acid-independent manner. The p190 precursor is cleaved by SUB1 prior to merozoite egress into 4 subunits p83, p30, p38, and p42 which remain non-covalently associated. SUB1-mediated proteolytic cleavage occurs in an orderly manner; the first cleavage occurs at the p30/p38 site, followed by cleavage at the p83/p30 site, the last cleavage occurs at the p38/p42 site. The order of cleavage is essential for parasite viability. SUB1-mediated processing is essential for merozoite egress. In a second processing step during erythrocyte invasion, p42 is cleaved by SUB2 into p33 and p19; the latter remains attached to the merozoite surface via its GPI-anchor and is endocytosed during the subsequent ring stage.

The protein resides in the cell membrane. It localises to the secreted. It is found in the vacuole membrane. In terms of biological role, during the asexual blood stage, involved in merozoite egress from host erythrocytes possibly via its interaction with the host cytoskeleton protein spectrin resulting in the destabilization of the host cytoskeleton and thus leading to erythrocyte cell membrane rupture. Involved in the binding to host erythrocytes and is required for host erythrocyte invasion. Functionally, by binding to host proinflammatory cytokine S100P may interfere with host immune responses. Involved in merozoite invasion of host erythrocytes. May play a role in the biogenesis and/or function of the food vacuole during the intraerythrocytic development. The polypeptide is Merozoite surface protein 1 (Plasmodium falciparum (isolate ro-33 / Ghana)).